Here is a 376-residue protein sequence, read N- to C-terminus: Putative aryl-alcohol dehydrogenase AAD14 (376 aa).

Residue Tyr-76 is the Proton donor of the active site. Position 151 (His-151) interacts with substrate. Asp-236–Lys-246 lines the NADP(+) pocket.

It belongs to the aldo/keto reductase family. Aldo/keto reductase 2 subfamily.

The protein is Putative aryl-alcohol dehydrogenase AAD14 (AAD14) of Saccharomyces cerevisiae (strain ATCC 204508 / S288c) (Baker's yeast).